We begin with the raw amino-acid sequence, 238 residues long: Response regulator receiver protein Anae109_2439 (238 aa).

2 Response regulatory domains span residues 3 to 117 (RYLI…AAAR) and 121 to 228 (LVAV…ERLH). 4-aspartylphosphate occurs at positions 52 and 169.

In terms of processing, is diphosphorylated by GchK.

Its function is as follows. Member of the two-component regulatory system GcHK/Anae109_2439. Is involved in a signal transduction system responding to oxygen availability. The chain is Response regulator receiver protein Anae109_2439 from Anaeromyxobacter sp. (strain Fw109-5).